The following is a 311-amino-acid chain: HTH-type transcriptional regulator DsdC (311 aa).

An HTH lysR-type domain is found at 15–72; sequence WQLSKMHTFEVAARHQSFALAAEELSLSPSAVSHRINQLEEELGIQLFVRSHRKVELT. The H-T-H motif DNA-binding region spans 32-51; the sequence is FALAAEELSLSPSAVSHRIN.

Belongs to the LysR transcriptional regulatory family.

Its function is as follows. Regulates the expression of the dsdX-dsdA operon. This Escherichia coli (strain K12) protein is HTH-type transcriptional regulator DsdC.